We begin with the raw amino-acid sequence, 345 residues long: NADH-ubiquinone oxidoreductase chain 2 (345 aa).

9 helical membrane passes run 1 to 21 (MNPI…ILAM), 25 to 45 (HWVY…PIIS), 60 to 80 (FLIQ…NAYL), 113 to 133 (FWLP…IATW), 148 to 168 (LIPT…GGLG), 191 to 211 (VIII…YMIF), 239 to 259 (IITS…PMSG), 274 to 294 (HLTP…MFYL), and 324 to 344 (SSLS…PLLI).

It belongs to the complex I subunit 2 family.

It localises to the mitochondrion inner membrane. It carries out the reaction a ubiquinone + NADH + 5 H(+)(in) = a ubiquinol + NAD(+) + 4 H(+)(out). In terms of biological role, core subunit of the mitochondrial membrane respiratory chain NADH dehydrogenase (Complex I) that is believed to belong to the minimal assembly required for catalysis. Complex I functions in the transfer of electrons from NADH to the respiratory chain. The immediate electron acceptor for the enzyme is believed to be ubiquinone. This Varanus baritji (Black-spotted ridge-tailed monitor) protein is NADH-ubiquinone oxidoreductase chain 2 (MT-ND2).